A 238-amino-acid chain; its full sequence is MGKRLISQNRGRGTPTYRAPSHKYKADLRHPRVDENTSLQGEVIDIEHDPARSAPIAKVAFENGEELFLLASEGVAVGNIIECGDDAEVKPGNIVPIGNVPEGFFICNIESKPNDGGKFVRSSGVYATVVTHEPTRTAVSMPSGNIKWLNPKCRAVVGIVAGGGRVDRPWLKAGKKYHKMKTRAAKYPRVSAVAMNPRDHPFGGGAWKHPGKPTTVSRNAPPGRKVGLIAARRTGMKR.

Polar residues predominate over residues 1-11 (MGKRLISQNRG). Disordered stretches follow at residues 1-22 (MGKR…APSH) and 202-223 (FGGG…APPG).

Belongs to the universal ribosomal protein uL2 family. Part of the 50S ribosomal subunit. Forms a bridge to the 30S subunit in the 70S ribosome.

In terms of biological role, one of the primary rRNA binding proteins. Required for association of the 30S and 50S subunits to form the 70S ribosome, for tRNA binding and peptide bond formation. It has been suggested to have peptidyltransferase activity; this is somewhat controversial. Makes several contacts with the 16S rRNA in the 70S ribosome. This chain is Large ribosomal subunit protein uL2, found in Methanosarcina mazei (strain ATCC BAA-159 / DSM 3647 / Goe1 / Go1 / JCM 11833 / OCM 88) (Methanosarcina frisia).